The chain runs to 320 residues: Protoheme IX farnesyltransferase 1 (320 aa).

9 consecutive transmembrane segments (helical) span residues 34–54, 58–78, 112–132, 135–155, 160–180, 189–209, 234–254, 255–275, and 299–319; these read GIIISNSIAAFGGFWIAFASA, LTGLAFLMTMVTAMLGTAFVM, AMILTYGSVLGIAGLAMLYSL, LTAFLGLAAFIFYAIIYTVWV, VWSTFVGSFPGAAPPLMGYCA, AVLLYTIMFLWQPPHFWAIGI, IKMMQYIAVLVPVTLLFPFSL, GTGHISPFYFLAALVLGGIWI, and LIYFCLLFFIMMIDSFMMFLI.

This sequence belongs to the UbiA prenyltransferase family. Protoheme IX farnesyltransferase subfamily. Interacts with CtaA.

Its subcellular location is the cell membrane. The enzyme catalyses heme b + (2E,6E)-farnesyl diphosphate + H2O = Fe(II)-heme o + diphosphate. The protein operates within porphyrin-containing compound metabolism; heme O biosynthesis; heme O from protoheme: step 1/1. Converts heme B (protoheme IX) to heme O by substitution of the vinyl group on carbon 2 of heme B porphyrin ring with a hydroxyethyl farnesyl side group. The polypeptide is Protoheme IX farnesyltransferase 1 (ctaB1) (Bacillus subtilis (strain 168)).